Here is a 1675-residue protein sequence, read N- to C-terminus: Clathrin heavy chain 1 (1675 aa).

Alanine 2 is modified (N-acetylalanine). Residues 2–479 (AQILPIRFQE…VDPTLALSVY (478 aa)) are globular terminal domain. WD40-like repeat stretches follow at residues 24–67 (NIGF…RPIS), 68–107 (ADSAIMNPASKVIALKAGKTLQIFNIEMKSKMKAHTMTDD), 108–149 (VTFW…SSLA), 150–195 (GCQI…QPIE), 196–257 (GHAA…PEAQ), 258–301 (NDFP…ISGE), and 302–330 (TIFVTAPHEATAGIIGVNRKGQVLSVCVE). Residue serine 67 is modified to Phosphoserine. Residue threonine 105 is modified to Phosphothreonine. Tyrosine 184 is modified (phosphotyrosine). A Phosphothreonine modification is found at threonine 394. Positions 449 to 465 (EKWLKEDKLECSEELGD) are binding site for the uncoating ATPase, involved in lattice disassembly. Residues 480-523 (LRANVPNKVIQCFAETGQVQKIVLYAKKVGYTPDWIFLLRNVMR) are flexible linker. Residues 524-634 (ISPDQGQQFA…RALEHFTDLY (111 aa)) form a distal segment region. The tract at residues 524–1675 (ISPDQGQQFA…QPQPGFGYSM (1152 aa)) is heavy chain arm. CHCR repeat units lie at residues 537 to 683 (VQDE…QICV), 686 to 828 (ASKY…SEDV), 833 to 972 (ILVV…PLID), 979 to 1124 (LSET…VKEA), 1128 to 1269 (YIKA…FRLA), 1274 to 1420 (LHIV…LLLN), and 1423 to 1566 (LMVL…RECF). Phosphotyrosine is present on tyrosine 634. The interval 639 to 1675 (AVVHTHLLNP…QPQPGFGYSM (1037 aa)) is proximal segment. Position 737 is an N6-succinyllysine (lysine 737). N6-acetyllysine is present on lysine 856. Tyrosine 899 carries the phosphotyrosine modification. Serine 1167 carries the phosphoserine modification. Tyrosine 1206 bears the Phosphotyrosine mark. An involved in binding clathrin light chain region spans residues 1213 to 1522 (AAKLLYNNVS…YLFKGNNRWK (310 aa)). Serine 1229 is modified (phosphoserine). Lysine 1441 is modified (N6-acetyllysine; alternate). Lysine 1441 bears the N6-succinyllysine; alternate mark. Tyrosine 1477 and tyrosine 1487 each carry phosphotyrosine. Serine 1494 carries the post-translational modification Phosphoserine. N6-acetyllysine is present on lysine 1501. Residues 1550 to 1675 (AEELLQWFLQ…QPQPGFGYSM (126 aa)) form a trimerization region.

The protein belongs to the clathrin heavy chain family. Clathrin triskelions, composed of 3 heavy chains and 3 light chains, are the basic subunits of the clathrin coat. In the presence of light chains, hub assembly is influenced by both the pH and the concentration of calcium. Interacts with HIP1. Interacts with DENND1A, DENND1B and DENND1C. Interacts with OCRL. Interacts with ERBB2. Interacts with FKBP6. Interacts with CKAP5 and TACC3 forming the TACC3/ch-TOG/clathrin complex located at spindle inter-microtubules bridges; the complex implicates clathrin triskelions; TACC3 and CLTC are proposed to form a composite microtubule interaction surface. Interacts with ATG16L1 (via N-terminus). Interacts with RFTN1; the interaction occurs in response to pathogens. Interacts with TMEM106B (via N-terminus). Interacts with DNAJC6; this interaction produces a local change in heavy-chain contacts, creating a detectable global distortion of the clathrin coat and leads to the recruitment of HSPA8.

The protein localises to the cytoplasmic vesicle membrane. The protein resides in the membrane. Its subcellular location is the coated pit. It is found in the melanosome. It localises to the cytoplasm. The protein localises to the cytoskeleton. The protein resides in the spindle. Functionally, clathrin is the major protein of the polyhedral coat of coated pits and vesicles. Two different adapter protein complexes link the clathrin lattice either to the plasma membrane or to the trans-Golgi network. Acts as a component of the TACC3/ch-TOG/clathrin complex proposed to contribute to stabilization of kinetochore fibers of the mitotic spindle by acting as inter-microtubule bridge. The TACC3/ch-TOG/clathrin complex is required for the maintenance of kinetochore fiber tension. Plays a role in early autophagosome formation. Interaction with DNAJC6 mediates the recruitment of HSPA8 to the clathrin lattice and creates local destabilization of the lattice promoting uncoating. In Bos taurus (Bovine), this protein is Clathrin heavy chain 1.